Reading from the N-terminus, the 620-residue chain is KIF-binding protein (620 aa).

Coiled coils occupy residues 30–64 (YKSK…QDIL) and 133–169 (LIKS…QLQN).

The protein belongs to the KIF-binding protein family.

The protein localises to the cytoplasm. It localises to the cytoskeleton. Its function is as follows. Activator of KIF1B plus-end-directed microtubule motor activity. Required for organization of axonal microtubules, and axonal outgrowth and maintenance during peripheral and central nervous system development. The chain is KIF-binding protein (kifbp) from Dictyostelium discoideum (Social amoeba).